A 382-amino-acid polypeptide reads, in one-letter code: Sphingoid long-chain base transporter RSB1 (382 aa).

Residues 1–34 (MSNATNNTLGSLLPQLEAAANSNSLYGGMVPNLR) are Extracellular-facing. Residues Asn-3 and Asn-6 are each glycosylated (N-linked (GlcNAc...) asparagine). Residues 35–55 (FNITMIVIWGILLTIHVVQLL) form a helical membrane-spanning segment. Topologically, residues 56–57 (MR) are cytoplasmic. The helical transmembrane segment at 58 to 78 (QYWFSIAFICTGILEVLGFIG) threads the bilayer. Over 79-90 (RTWSHSNVADMD) the chain is Extracellular. The helical transmembrane segment at 91-111 (AFLLNMICLTIAPVFTMGGIY) threads the bilayer. At 112–135 (YQLAKLIEVYGHRFSLLPSPMAYS) the chain is on the cytoplasmic side. A helical membrane pass occupies residues 136–156 (FIFICSDIVSLVVQAVGGGLC). The Extracellular segment spans residues 157–171 (GVAVTDGTSTTTGNH). Residues 172-192 (VFIAGLAIQVASMAIFLMLWF) form a helical membrane-spanning segment. Topologically, residues 193–241 (HFLFRIYISVRWEHINSRPISLSLLKISQTEVDYLYREKFHFLRLEPKR) are cytoplasmic. Residues 242–262 (WVFHYFNLAMTVAVLTIFTRC) form a helical membrane-spanning segment. Over 263-281 (CYRLAELVVGWDGYLITHE) the chain is Extracellular. Residues 282 to 302 (WYFIILDALMMAIATVTLTIF) form a helical membrane-spanning segment. Residues 303 to 382 (HPGFAFKGRS…LFSSKKKAKL (80 aa)) lie on the Cytoplasmic side of the membrane.

Belongs to the lipid-translocating exporter (LTE) (TC 9.A.26.1) family.

It localises to the cell membrane. Its function is as follows. Catalyzes the ATP-dependent translocation of sphingoid long-chain bases (LCBs) from the cytoplasmic site toward the extracytoplasmic side of the membrane (flip-flop). Involved in the establishment of the functional lipid asymmetry of the plasma membrane. Regulates intracellular levels of LCBs, sphingolipid precursors that are growth inhibitory at increased levels. In Saccharomyces cerevisiae (strain RM11-1a) (Baker's yeast), this protein is Sphingoid long-chain base transporter RSB1 (RSB1).